The following is a 138-amino-acid chain: MPNFSGNWKIIRSENFEEMLKALGVNMMMRKIAVAAASKPAVEIKQENDTFYIKTSTTVRTTEINFKIGEEFEEQTVDGRPCKSLVKWESGNKMVCEQRLLKGEGPKTSWSRELTNDGELILTMTADDVVCTRVYVRE.

Positions 21 to 31 (KALGVNMMMRK) match the Nuclear localization signal motif. A Glycyl lysine isopeptide (Lys-Gly) (interchain with G-Cter in SUMO) cross-link involves residue K102. 133 to 135 (RVY) contacts all-trans-retinoate.

Belongs to the calycin superfamily. Fatty-acid binding protein (FABP) family. Interacts with importin alpha. Interacts with RXR and RARA. Sumoylated in response to retinoic acid binding, sumoylation is critical for dissociation from ER and subsequent nuclear translocation. In terms of tissue distribution, embryo and skin of adult mouse.

The protein localises to the cytoplasm. It localises to the endoplasmic reticulum. It is found in the nucleus. Functionally, transports retinoic acid to the nucleus. Regulates the access of retinoic acid to the nuclear retinoic acid receptors. The sequence is that of Cellular retinoic acid-binding protein 2 (Crabp2) from Mus musculus (Mouse).